The sequence spans 364 residues: Aminomethyltransferase (364 aa).

The protein belongs to the GcvT family. As to quaternary structure, the glycine cleavage system is composed of four proteins: P, T, L and H.

It carries out the reaction N(6)-[(R)-S(8)-aminomethyldihydrolipoyl]-L-lysyl-[protein] + (6S)-5,6,7,8-tetrahydrofolate = N(6)-[(R)-dihydrolipoyl]-L-lysyl-[protein] + (6R)-5,10-methylene-5,6,7,8-tetrahydrofolate + NH4(+). In terms of biological role, the glycine cleavage system catalyzes the degradation of glycine. This Shewanella baltica (strain OS195) protein is Aminomethyltransferase.